A 207-amino-acid chain; its full sequence is MRRSKTAAPWPGTIVPRAFFNRMATEVAPQLLNKILAAADGRAGRIVEVEAYAGALDPAAHTYRGKTPRNATMFGPPGHFYVYFTYGMHWCCNCVCGPDGAGTGVLIRALEPLHGLEQMRAARPPRTRDRDLCRGPARLTQAMGIGGAQDGVDLVGARDGFAIVDDGMAPPADLAGGPRIGIRVGQDLPWRWSVPGNRYVSGAVPRI.

It belongs to the DNA glycosylase MPG family.

The polypeptide is Putative 3-methyladenine DNA glycosylase (Burkholderia cenocepacia (strain HI2424)).